An 843-amino-acid chain; its full sequence is Protein piwi (843 aa).

A Nuclear localization signal motif is present at residues 1 to 12 (MADDQGRGRRRP). The disordered stretch occupies residues 1–76 (MADDQGRGRR…TERKPWGDQY (76 aa)). Positions 1–257 (MADDQGRGRR…ILLGTEITHK (257 aa)) are interaction with CBX5 and papi. A symmetric dimethylarginine mark is found at Arg7, Arg9, Arg10, and Arg11. A compositionally biased stretch (basic and acidic residues) spans 41–72 (PRADPRIEASRERRALEEAPRREGGPTERKPW). The PAZ domain occupies 263–372 (TIYDIMRRCS…LIPELCRVTG (110 aa)). The 292-residue stretch at 538 to 829 (LILCLVPNDN…LATLVGTNLH (292 aa)) folds into the Piwi domain. Position 589 (Gln589) interacts with Mg(2+). Residues Asp614 and Asp685 contribute to the active site. Leu843 serves as a coordination point for Mg(2+).

It belongs to the argonaute family. Piwi subfamily. In terms of assembly, in the ovaries, part of a complex composed of at least Panx, nxf2, piwi and Nxt1. The complex is knowns as Panx-induced co-transcriptional silencing (PICTS) complex, Panx-nxf2-dependent TAP/p15 silencing (Pandas complex), SFiNX (silencing factor interacting nuclear export variant) or piwi-Panx-nxf2-p15 (PPNP) complex. Interacts with vas; this interaction is RNA-independent. Interacts with Dcr-1 and Fmr1; these interactions occur in polar granules. Interacts (via N-terminal region) with CBX5 (via chromoshadow domain). Forms a complex with Hsp83 and Hop; probably Hop mediates the interaction between piwi and Hsp83. Forms a complex with Yb body components armi and fs(1)Yb; this interaction is required for proper piRNA loading and nuclear localization of piwi. Interaction of Piwi and fs(1)Yb is likely to occur via armi. Interacts (via the N-terminal region when unmethylated or symmetrically methylated at Arg-10) with papi (via Tudor domain). Interacts with vret. Interacts with Panx. Interacts with arx. Interacts with Tudor-SN. Interacts with Nup358 (via N-terminus). Associates with the nuclear pore complex via interaction with Elys. Interacts with thoc5; the interaction might be partly RNA-mediated. Interacts with xmas-2. In terms of processing, symmetrically dimethylated, most likely by csul. Methylation at Arg-10 enhances binding to papi whereas methylation at Arg-7, Arg-9 or Arg-11 reduces binding affinity to papi. Phosphorylated on serine and tyrosine residues in an Hsp83-dependent manner. Expressed in ovaries (at protein level). Expressed somatically in ovariole terminal filament cells, epithelial sheath cells, cap cells and follicle cells (at protein level). Expressed in nurse cells and oocytes in developing egg chambers (at protein level). In embryos, accumulates in pole cells (at protein level). In larval and adult testis, expressed in a germinal proliferative center at the apical tip containing somatic hub cells and mitotically dividing germ stem cells (at protein level).

It is found in the cytoplasm. It localises to the nucleus. The protein localises to the nucleoplasm. Its subcellular location is the chromosome. Its function is as follows. Acts via the piwi-interacting RNA (piRNA) metabolic process, which mediates the repression of transposable elements during meiosis by forming complexes composed of piRNAs and Piwi proteins and governs the methylation and subsequent repression of transposons. Directly binds piRNAs, a class of 24 to 30 nucleotide RNAs that are generated by a Dicer-independent mechanism and are primarily derived from transposons and other repeated sequence elements. In ovarian somatic cells, mediates silencing of transposable elements at the transcriptional level in a mael-dependent manner. Involved in silencing of long terminal repeat (LTR) retrotransposons in male germline. In testis, regulates spermatogenesis together with Tudor-SN. In germ cells, mediates silencing at both transcriptional and post-transcriptional levels and is involved in the maintenance of populations of primary and secondary piRNAs. Piwi-mediated transcriptional silencing is accompanied by the formation of His3 trimethylated on 'Lys-10' (H3K9me3) associated euchromatin and heterochromatin. In ovary, associates predominantly with antisense piRNAs that contain uridine at their 5' end. Association with sense piRNAs is also observed but to a lesser extent. Mediates a somatic signaling mechanism required for the maintenance of germline stem cells to produce and maintain a daughter germline stem cell. It is not essential for the further differentiation of the committed daughter cell. Acts cell autonomously to promote germline stem cell division. Its role in stem cell maintenance does not seem to require nuclear localization. Required maternally for the posterior localization of osk and vas and for pole cell formation during oogenesis and early embryogenesis. Together with Hop and Hsp83, mediates canalization, also known as developmental robustness, likely via epigenetic silencing of existing genetic variants and suppression of transposon-induced new genetic variation. Shows RNA cleavage activity, although is not required for any of its known functions. In the ovaries, forms a complex with nxf2, Panx and Nxt1 which acts as effectors of cotranscriptional transposon silencing. In Drosophila melanogaster (Fruit fly), this protein is Protein piwi.